The following is a 307-amino-acid chain: Protoheme IX farnesyltransferase (307 aa).

8 consecutive transmembrane segments (helical) span residues 32–52 (MGIV…ALHF), 65–85 (FFTI…NNYI), 108–128 (PGFA…FLLL), 131–151 (PMAV…YSLW), 158–178 (LNTV…WAAI), 186–206 (IAWM…LALA), 251–271 (LGIT…VLGF), and 287–307 (FVYS…VTFF).

The protein belongs to the UbiA prenyltransferase family. Protoheme IX farnesyltransferase subfamily. Interacts with CtaA.

Its subcellular location is the cell membrane. It catalyses the reaction heme b + (2E,6E)-farnesyl diphosphate + H2O = Fe(II)-heme o + diphosphate. Its pathway is porphyrin-containing compound metabolism; heme O biosynthesis; heme O from protoheme: step 1/1. In terms of biological role, converts heme B (protoheme IX) to heme O by substitution of the vinyl group on carbon 2 of heme B porphyrin ring with a hydroxyethyl farnesyl side group. In Bacillus cereus (strain ATCC 10987 / NRS 248), this protein is Protoheme IX farnesyltransferase.